The chain runs to 166 residues: Phospholipase A2 inhibitor clone 10 (166 aa).

The first 19 residues, Met1 to Gly19, serve as a signal peptide directing secretion. The C-type lectin domain occupies Leu46 to Glu161. Intrachain disulfides connect Cys83–Cys160 and Cys138–Cys152. The N-linked (GlcNAc...) asparagine glycan is linked to Asn122.

This sequence belongs to the alpha-type phospholipase A2 inhibitor family. In terms of assembly, homotrimer; non-covalently linked. Expressed by the liver.

Its subcellular location is the secreted. Its function is as follows. This phospholipase A2 inhibitor binds directly phospholipase A2 in the presence or absence of calcium. This chain is Phospholipase A2 inhibitor clone 10, found in Bothrops moojeni (Lance-headed viper).